We begin with the raw amino-acid sequence, 343 residues long: Interferon-inducible protein AIM2 (343 aa).

Positions 1-87 (MESKYKEILL…AKRLQEEKEK (87 aa)) constitute a Pyrin domain. The HIN-200 domain maps to 138–337 (MVAQQESIRE…SGVHSTIKVI (200 aa)).

This sequence belongs to the HIN-200 family. Self-associates; forms homooligomers in response to cytosolic double-stranded DNA (dsDNA) and the dsDNA seems to serve as oligomerization platform. Component of AIM2 inflammasome, which consists of a signal sensor component (AIM2), an adapter (PYCARD/ASC), which recruits an effector pro-inflammatory caspase (CASP1). Interacts (via pyrin domain) with PYCARD/ASC (via pyrin domain); interaction is direct. Component of the AIM2 PANoptosome complex, a multiprotein complex that drives inflammatory cell death (PANoptosis). Interacts with PYDC5; disrupts assembly of the AIM2 inflammasome complex. Interacts with EIF2AK2/PKR. Interacts with MAPRE1. Interacts with IFI16. Interacts with isoform IFI16-beta of IFI16; preventing the interaction between AIM2 and PYCARD/ASC. Interacts with RACK1; promoting association with PP2A phosphatase and dephosphorylation of AKT1. Interacts with TRIM11; promoting AIM2 recruitment to autophagosomes and autophagy-dependent degradation. As to quaternary structure, (Microbial infection) Interacts with human herpesvirus 8 protein SOX/ORF37; this interaction inhibits AIM2 polymerization and subsequent inflammasome activation. Post-translationally, degraded via selective autophagy following interaction with TRIM11. Expressed in spleen, small intestine, peripheral blood leukocytes, and testis.

The protein resides in the cytoplasm. Its subcellular location is the inflammasome. The protein localises to the nucleus. With respect to regulation, inactive in absence of double-stranded DNA (dsDNA). Homooligomerizes upon binding to dsDNA, dsDNA serving as an oligomerization platform. AIM2 requires large dsDNA to generate a structural template that couples dsDNA ligand-binding and homooligomerization. Homooligomerization is followed by recruitment of PYCARD/ASC to initiate speck formation (nucleation). AIM2 and PYCARD/ASC homooligomer filaments assemble bidirectionally and the recognition between AIM2 and PYCARD/ASC oligomers occurs in a head-to-tail manner. Clustered PYCARD/ASC nucleates the formation of CASP1 filaments through the interaction of their respective CARD domains, acting as a platform for CASP1 polymerization and activation. Active CASP1 then specifically processes protein precursors, such as gasdermin-D (GSDMD), IL1B and IL18, leading to the release of mature cytokines in the extracellular milieu or pyroptosis, depending on cell type. AIM2 can be activated in response to events that cause genomic DNA (HIV protease inhibitor nelfinavir) or mitochondrial DNA release in the cytoplasm (such as Perfluoroalkyl substance pollutants or cholesterol overload). Activation of the AIM2 inflammasome is inhibited by isoform IFI16-beta of IFI16, which prevents the interaction between AIM2 and PYCARD/ASC. Activation of the AIM2 inflammasome is inhibited by TRIM11, which promotes autophagy-dependent degradation of AIM2. Sensor component of the AIM2 inflammasome, which mediates inflammasome activation in response to the presence of double-stranded DNA (dsDNA) in the cytosol, leading to subsequent pyroptosis. Inflammasomes are supramolecular complexes that assemble in the cytosol in response to pathogens and other damage-associated signals and play critical roles in innate immunity and inflammation. Acts as a recognition receptor (PRR): specifically recognizes and binds dsDNA in the cytosol, and mediates the formation of the inflammasome polymeric complex composed of AIM2, CASP1 and PYCARD/ASC. Recruitment of pro-caspase-1 (proCASP1) to the AIM2 inflammasome promotes caspase-1 (CASP1) activation, which subsequently cleaves and activates inflammatory cytokines IL1B and IL18 and gasdermin-D (GSDMD), promoting cytokine secretion. In some cells, CASP1 activation mediates cleavage and activation of GSDMD, triggering pyroptosis without promoting cytokine secretion. Detects cytosolic dsDNA of viral and bacterial origin in a non-sequence-specific manner. Involved in the DNA damage response caused by acute ionizing radiation by mediating pyroptosis of intestinal epithelial cells and bone marrow cells in response to double-strand DNA breaks. Mechanistically, AIM2 senses DNA damage in the nucleus to mediate inflammasome assembly and inflammatory cell death. Also acts as a regulator of neurodevelopment via its role in the DNA damage response: acts by promoting neural cell death in response to DNA damage in the developing brain, thereby purging genetically compromised cells of the central nervous system. Pyroptosis mediated by the AIM2 inflammasome in response to DNA damage is dependent on GSDMD without involving IL1B and IL18 cytokine secretion. Also acts as a mediator of pyroptosis, necroptosis and apoptosis (PANoptosis), an integral part of host defense against pathogens, in response to bacterial infection. Can also trigger PYCARD/ASC-dependent, caspase-1-independent cell death that involves caspase-8 (CASP8). Its function is as follows. Also acts as a tumor suppressor independently of its role in inflammatory response. Able to suppress overt cell proliferation in enterocytes: restricts stem cell proliferation in the intestinal mucosa in an inflammasome-independent manner, contributing to a decrease in the likelihood of colorectal cancer development. AIM2 suppresses cell proliferation by inhibiting phosphorylation of AKT1 at 'Ser-473', preventing AKT1 activation and AKT-mTOR signaling pathway. Inhibits AKT1 phosphorylation both by inhibiting the activity of PRKDC/DNA-PK kinase and promoting dephosphorylation by PP2A phosphatase. Also acts as a key regulator of regulatory T-cells (Treg) homeostasis by promoting their stability: acts by preventing AKT1 activation. Its role in Treg homeostasis is important to restain autoimmune diseases. The polypeptide is Interferon-inducible protein AIM2 (Homo sapiens (Human)).